A 342-amino-acid chain; its full sequence is GTPase Obg (342 aa).

In terms of domain architecture, Obg spans 1–159 (MKFLDLCKVY…RTIWLRLKLI (159 aa)). Residues 160-327 (ADAGLLGLPN…VLRALWAEID (168 aa)) enclose the OBG-type G domain. GTP contacts are provided by residues 166-173 (GLPNAGKS), 191-195 (FTTLV), 212-215 (DIPG), 279-282 (NKID), and 308-310 (SGV). 2 residues coordinate Mg(2+): serine 173 and threonine 193.

This sequence belongs to the TRAFAC class OBG-HflX-like GTPase superfamily. OBG GTPase family. In terms of assembly, monomer. Mg(2+) serves as cofactor.

It localises to the cytoplasm. An essential GTPase which binds GTP, GDP and possibly (p)ppGpp with moderate affinity, with high nucleotide exchange rates and a fairly low GTP hydrolysis rate. Plays a role in control of the cell cycle, stress response, ribosome biogenesis and in those bacteria that undergo differentiation, in morphogenesis control. The sequence is that of GTPase Obg from Cereibacter sphaeroides (strain KD131 / KCTC 12085) (Rhodobacter sphaeroides).